The chain runs to 883 residues: N,N'-diacetylchitobiase (883 aa).

Residues M1 to G17 form the signal peptide. Residue C18 is the site of N-palmitoyl cysteine attachment. C18 is lipidated: S-diacylglycerol cysteine. 3 cysteine pairs are disulfide-bonded: C54–C64, C394–C402, and C502–C577. Residue E537 is the Proton donor of the active site.

Belongs to the glycosyl hydrolase 20 family. This protein is probably a lipoprotein, its processing is inhibited by globomycin.

The protein localises to the cell outer membrane. It catalyses the reaction Hydrolysis of terminal non-reducing N-acetyl-D-hexosamine residues in N-acetyl-beta-D-hexosaminides.. It functions in the pathway glycan degradation; chitin degradation. In terms of biological role, hydrolysis of terminal, non-reducing N-acetyl-beta-D-glucosamine residues in chitobiose and higher analogs, and in glycoproteins. In Vibrio harveyi (Beneckea harveyi), this protein is N,N'-diacetylchitobiase (chb).